The primary structure comprises 99 residues: Beta-defensin 127 (99 aa).

An N-terminal signal peptide occupies residues 1 to 20 (MGLFMIIAILLFQKPTVTEQ). 3 disulfides stabilise this stretch: C24/C53, C33/C47, and C37/C54. Residues 66–99 (ITKPSHPKPATLALTLQDYVTIIENFPSLKTQST) constitute a propeptide that is removed on maturation.

The protein belongs to the beta-defensin family.

Its subcellular location is the secreted. Its function is as follows. Has antibacterial activity. This is Beta-defensin 127 (DEFB127) from Pan troglodytes (Chimpanzee).